The primary structure comprises 350 residues: Small ribosomal subunit biogenesis GTPase RsgA (350 aa).

The span at 1 to 17 (MSKNKLSKGQQRRVNAN) shows a compositional bias: polar residues. The disordered stretch occupies residues 1–33 (MSKNKLSKGQQRRVNANHQRRLKTSKEKPDYDD). The region spanning 104–273 (TSVLTRPDFY…VIDSPGVREF (170 aa)) is the CP-type G domain. Residues 160 to 163 (NKID) and 214 to 222 (GQSGVGKSS) contribute to the GTP site. 4 residues coordinate Zn(2+): Cys297, Cys302, His304, and Cys310.

The protein belongs to the TRAFAC class YlqF/YawG GTPase family. RsgA subfamily. As to quaternary structure, monomer. Associates with 30S ribosomal subunit, binds 16S rRNA. Zn(2+) serves as cofactor.

The protein localises to the cytoplasm. In terms of biological role, one of several proteins that assist in the late maturation steps of the functional core of the 30S ribosomal subunit. Helps release RbfA from mature subunits. May play a role in the assembly of ribosomal proteins into the subunit. Circularly permuted GTPase that catalyzes slow GTP hydrolysis, GTPase activity is stimulated by the 30S ribosomal subunit. The protein is Small ribosomal subunit biogenesis GTPase RsgA of Escherichia fergusonii (strain ATCC 35469 / DSM 13698 / CCUG 18766 / IAM 14443 / JCM 21226 / LMG 7866 / NBRC 102419 / NCTC 12128 / CDC 0568-73).